Here is a 458-residue protein sequence, read N- to C-terminus: Phosphoglucosamine mutase (458 aa).

Ser100 serves as the catalytic Phosphoserine intermediate. Residues Ser100, Asp254, Asp256, and Asp258 each coordinate Mg(2+). Position 100 is a phosphoserine (Ser100).

This sequence belongs to the phosphohexose mutase family. Mg(2+) serves as cofactor. Activated by phosphorylation.

It catalyses the reaction alpha-D-glucosamine 1-phosphate = D-glucosamine 6-phosphate. In terms of biological role, catalyzes the conversion of glucosamine-6-phosphate to glucosamine-1-phosphate. The protein is Phosphoglucosamine mutase of Nocardia farcinica (strain IFM 10152).